Here is a 416-residue protein sequence, read N- to C-terminus: Casein kinase I isoform epsilon (416 aa).

The Protein kinase domain occupies 9 to 277 (YRLGRKIGSG…YLRQLFRNLF (269 aa)). Residues 15–23 (IGSGSFGDI) and lysine 38 each bind ATP. Aspartate 128 acts as the Proton acceptor in catalysis. The segment covering 301–318 (PEDVDRERREHEREERMG) has biased composition (basic and acidic residues). A disordered region spans residues 301–416 (PEDVDRERRE…TSVPFDHLGK (116 aa)). 2 positions are modified to phosphoserine: serine 343 and serine 354. Over residues 351-365 (TPASRIQQTGNTSPR) the composition is skewed to polar residues. Threonine 362 carries the phosphothreonine modification. Serine 363 is modified (phosphoserine). Arginine 382 is modified (omega-N-methylarginine). Phosphoserine occurs at positions 389, 405, and 408.

It belongs to the protein kinase superfamily. CK1 Ser/Thr protein kinase family. Casein kinase I subfamily. In terms of assembly, monomer. Component of the circadian core oscillator, which includes the CRY proteins, CLOCK, or NPAS2, ARTNL/BMAL1 or ARTNL2/BMAL2, CSNK1D and/or CSNK1E, TIMELESS and the PER proteins. Interacts with ANKRD6. Interacts with PER1. Interacts with DBNDD2, LRP5, LRP6 and SOCS3. Interacts with SNAI1 (via zinc fingers). Interacts with DDX3X; this interaction greatly enhances CSNK1E affinity for ATP and DVL2 phosphorylation, but inhibits DDX3X ATPase/helicase activity. In the presence of RNA, the interaction is decreased. Interacts with FAM83A, FAM83B, FAM83E and FAM83H (via DUF1669). In terms of processing, autophosphorylated. Partially dephosphorylated by PPP5C. May be dephosphorylated by PP1. Expressed in all tissues examined, including brain, heart, lung, liver, pancreas, kidney, placenta and skeletal muscle. Expressed in monocytes and lymphocytes but not in granulocytes.

It is found in the cytoplasm. The protein resides in the nucleus. The enzyme catalyses L-seryl-[protein] + ATP = O-phospho-L-seryl-[protein] + ADP + H(+). It carries out the reaction L-threonyl-[protein] + ATP = O-phospho-L-threonyl-[protein] + ADP + H(+). Phosphorylation leads to a decrease in the catalytic activity. Its function is as follows. Casein kinases are operationally defined by their preferential utilization of acidic proteins such as caseins as substrates. Participates in Wnt signaling. Phosphorylates DVL1. Phosphorylates DVL2. Phosphorylates NEDD9/HEF1. Central component of the circadian clock. In balance with PP1, determines the circadian period length, through the regulation of the speed and rhythmicity of PER1 and PER2 phosphorylation. Controls PER1 and PER2 nuclear transport and degradation. Inhibits cytokine-induced granuloytic differentiation. The sequence is that of Casein kinase I isoform epsilon (Csnk1e) from Mus musculus (Mouse).